Reading from the N-terminus, the 257-residue chain is MSLIDIQNLTIKNTSEKSLIKGIDLKIFSQQINALIGESGAGKSLIAKALLEYLPFDLSCTYDSYQFDGENVSRLSQYYGHTIGYISQNYAESFNDHTKLGKQLTAIYRKHYKGSKEEALSKVDKALSWVNLQSKDILNKYSFQLSGGQLERVYIASVLMLEPKLIIADEPVASLDALNGNQVMDLLQHIVLEHGQTLFIITHNLSHVLKYCQYIYVLKEGQIIERGNINHFKYEHLHPYTERLIKYRTQLKRDYYD.

Residues 4–245 (IDIQNLTIKN…HLHPYTERLI (242 aa)) enclose the ABC transporter domain. Position 37-44 (37-44 (GESGAGKS)) interacts with ATP.

The protein belongs to the ABC transporter superfamily. As to quaternary structure, the complex is composed of two ATP-binding proteins (NikD and NikE), two transmembrane proteins (NikB and NikC) and a solute-binding protein (NikA).

Its subcellular location is the cell membrane. The catalysed reaction is Ni(2+)(out) + ATP + H2O = Ni(2+)(in) + ADP + phosphate + H(+). Its function is as follows. Part of the ABC transporter complex NikABCDE (Opp2) involved in nickel import. Probably responsible for energy coupling to the transport system. This Staphylococcus aureus (strain MSSA476) protein is Nickel import system ATP-binding protein NikD.